The sequence spans 254 residues: Major prion protein (254 aa).

The signal sequence occupies residues 1-22 (MANLSYWLLALFVATWTDVGLC). Residues 23 to 231 (KKRPKPGGWN…SQAYYDGRRS (209 aa)) are interaction with GRB2, ERI3 and SYN1. Residues 25 to 104 (RPKPGGWNTG…THNQWNKPSK (80 aa)) form a disordered region. Tandem repeats lie at residues 51–59 (PQGGGTWGQ), 60–67 (PHGGGWGQ), 68–75 (PHGGGWGQ), 76–83 (PHGGGWGQ), and 84–91 (PHGGGWGQ). The tract at residues 51–91 (PQGGGTWGQPHGGGWGQPHGGGWGQPHGGGWGQPHGGGWGQ) is 5 X 8 AA tandem repeats of P-H-G-G-G-W-G-Q. A compositionally biased stretch (gly residues) spans 52-95 (QGGGTWGQPHGGGWGQPHGGGWGQPHGGGWGQPHGGGWGQGGGT). Residues histidine 61, glycine 62, glycine 63, histidine 69, glycine 70, glycine 71, histidine 77, glycine 78, glycine 79, histidine 85, glycine 86, and glycine 87 each coordinate Cu(2+). The segment at 90–231 (GQGGGTHNQW…SQAYYDGRRS (142 aa)) is prP27-30 (protease resistant core). A disulfide bond links cysteine 179 and cysteine 214. N-linked (GlcNAc...) asparagine glycans are attached at residues asparagine 181 and asparagine 197. A lipid anchor (GPI-anchor amidated serine) is attached at serine 231. Residues 232–254 (SAVLFSSPPVILLISFLIFLIVG) constitute a propeptide, removed in mature form.

Belongs to the prion family. As to quaternary structure, monomer and homodimer. Has a tendency to aggregate into amyloid fibrils containing a cross-beta spine, formed by a steric zipper of superposed beta-strands. Soluble oligomers may represent an intermediate stage on the path to fibril formation. Copper binding may promote oligomerization. Interacts with GRB2, APP, ERI3/PRNPIP and SYN1. Mislocalized cytosolically exposed PrP interacts with MGRN1; this interaction alters MGRN1 subcellular location and causes lysosomal enlargement. Interacts with KIAA1191.

Its subcellular location is the cell membrane. It localises to the golgi apparatus. Its primary physiological function is unclear. Has cytoprotective activity against internal or environmental stresses. May play a role in neuronal development and synaptic plasticity. May be required for neuronal myelin sheath maintenance. May play a role in iron uptake and iron homeostasis. Soluble oligomers are toxic to cultured neuroblastoma cells and induce apoptosis (in vitro). Association with GPC1 (via its heparan sulfate chains) targets PRNP to lipid rafts. Also provides Cu(2+) or Zn(2+) for the ascorbate-mediated GPC1 deaminase degradation of its heparan sulfate side chains. This is Major prion protein (PRNP) from Cricetulus griseus (Chinese hamster).